Here is a 271-residue protein sequence, read N- to C-terminus: MNSYSSAAPGKRLEGKVAIITGGASGIGATAVQIFHDNGAKVVISDVQDKLGQALADKLGEGVSYIHCDISNENDVINLVDTTVAKYGKLDIMYNNAGVIDRNFGSILDTPKSDLERLLSVNTIGGFLGAKHAARVMVPKQKGCILFTASACTEIAGLGSPAYTVSKYGVVALVKSLAAELGQYGIRVNCVSPYGLATGMSTAGVDPALIESSLSEMGNLKGQVLKTDGIANAALYLACDEASYVSGQNLVVDGGFSILNPTIMKAYNLIN.

The active-site Proton donor is the serine 150. Tyrosine 163 (proton acceptor) is an active-site residue. The Proton donor/acceptor role is filled by lysine 167.

The protein belongs to the short-chain dehydrogenases/reductases (SDR) family. As to expression, mainly expressed in petioles.

The enzyme catalyses 21-O-acetyl-isomeliandiol + A = (21S)-21-acetoxyl-apo-melianone + AH2. The protein operates within secondary metabolite biosynthesis; terpenoid biosynthesis. Oxidoreductase involved in the biosynthesis of limonoids triterpene natural products such as azadirachtin, an antifeedant widely used as bioinsecticide, and possessing many medicinal applications including anti-tumoral, anti-malarial, anti-rheumatic, antibacterial, anti-inflammatory, anti-pyretic and diuretic effects. Catalyzes the oxidation of 21-O-acetyl-isomeliandiol to (21S)-21-acetoxyl-apo-melianone. The chain is (21S)-21-acetoxyl-apo-melianone synthase SDR from Melia azedarach (Chinaberry tree).